The sequence spans 193 residues: Tetrahydromethanopterin S-methyltransferase subunit A 2 (193 aa).

Over 1–38 (MADKKPTAENWPVVSGDYIVGDPESPVAVTTLASHNED) the chain is Cytoplasmic. A helical transmembrane segment spans residues 39–58 (IPAAAGAAIAGPCKTENLGI). Topologically, residues 59-193 (EKVVANIISN…SESEKIESEA (135 aa)) are extracellular. His-84 contacts 5-hydroxybenzimidazolylcob(I)amide. The tract at residues 174-193 (SKKSSFVESSSESEKIESEA) is disordered.

It belongs to the MtrA family. As to quaternary structure, the complex is composed of 8 subunits; MtrA, MtrB, MtrC, MtrD, MtrE, MtrF, MtrG and MtrH. 5-hydroxybenzimidazolylcob(I)amide serves as cofactor.

The protein resides in the cell membrane. The enzyme catalyses 5-methyl-5,6,7,8-tetrahydromethanopterin + coenzyme M + 2 Na(+)(in) = 5,6,7,8-tetrahydromethanopterin + methyl-coenzyme M + 2 Na(+)(out). Its pathway is one-carbon metabolism; methanogenesis from CO(2); methyl-coenzyme M from 5,10-methylene-5,6,7,8-tetrahydromethanopterin: step 2/2. Part of a complex that catalyzes the formation of methyl-coenzyme M and tetrahydromethanopterin from coenzyme M and methyl-tetrahydromethanopterin. This is an energy-conserving, sodium-ion translocating step. This is Tetrahydromethanopterin S-methyltransferase subunit A 2 from Methanobrevibacter ruminantium (strain ATCC 35063 / DSM 1093 / JCM 13430 / OCM 146 / M1) (Methanobacterium ruminantium).